The following is a 472-amino-acid chain: MATYLAPPVSSNKENSPAPNIALSDIDAISLSLRTSLSGVTLPAKKKVAALGLGRAPKFTYRRHSNKPYNRSTSITRAKKAAVQTKSVRSKAAVKKSNTRPLPLKLVQRLDVESARLERLRKAVWNPPAPVPGQVRVPLKLPYPRFPSIEYIDNEYLKEIPVQYIFDRMVPLLPSIATITLAYQPYASIPHPDSKILRDTTLAFAIPEVIDGRKPHWAAKARGREPDLALAVAYKSGEGSNGNTVVAVNSLAFATQCAYWPRLLTTSIPIPTPKRPTPSASAVSTSLPAIVETEENVSDASFSSSSSWSDSDSEVEFIDLPRLPRPVKDDKGFLHLPLVELPIPSPSTFPIIHRHLHHPSRALLPDLLGLPEHYTTRSQVLDAISGLSVQQLMDKLTTLQGVWQNLCSLGIGRLGTWRQLGEAWACVVGVIAGQGLLIAGQEEAEVQRTGRKTAAEDVAWEWVRREKAKEQQ.

N-linked (GlcNAc...) asparagine glycans are attached at residues N70 and N296.

Functionally, required for developmental progression after cells of opposite mating types fuse with one another, essential for processes common to both dikaryotic filament formation and monokaryotic fruiting. A direct target for transcription factors Sxi1-alpha and Sxi2-a. The protein is Clampless protein 1 of Cryptococcus neoformans var. neoformans serotype D (strain B-3501A) (Filobasidiella neoformans).